Consider the following 528-residue polypeptide: Na(+)/H(+) antiporter NhaB (528 aa).

A run of 10 helical transmembrane segments spans residues 25 to 47 (IISF…GWLL), 66 to 86 (PGGL…SQVL), 97 to 117 (LLLV…LFVF), 130 to 164 (VSLL…FYSI), 241 to 261 (IRMS…CFLV), 304 to 324 (AFIG…VGLI), 351 to 371 (ALPF…IIDL), 390 to 410 (LVVF…VFVG), 448 to 468 (ATPN…APLI), and 476 to 496 (VWMA…AIQL).

Belongs to the NhaB Na(+)/H(+) (TC 2.A.34) antiporter family.

It is found in the cell inner membrane. It carries out the reaction 2 Na(+)(in) + 3 H(+)(out) = 2 Na(+)(out) + 3 H(+)(in). Functionally, na(+)/H(+) antiporter that extrudes sodium in exchange for external protons. The protein is Na(+)/H(+) antiporter NhaB of Shewanella halifaxensis (strain HAW-EB4).